The sequence spans 310 residues: Vomeronasal type-1 receptor 40 (310 aa).

Topologically, residues 1–20 are extracellular; the sequence is MNKANMLRTDKDMQIILFSE. Residues 21 to 41 traverse the membrane as a helical segment; sequence VSVGISANSILFIAHVCMILG. Topologically, residues 42–50 are cytoplasmic; that stretch reads ENRPKPIDL. A helical membrane pass occupies residues 51-71; sequence YIAFLSLTQLMLLITMGLIAV. Over 72 to 93 the chain is Extracellular; it reads DMFLSQGIWDSTTCQSLIYLHR. Residues cysteine 85 and cysteine 172 are joined by a disulfide bond. A helical membrane pass occupies residues 94–114; the sequence is LLRGLSLCATCLLNILWTITL. Residues 115–134 are Cytoplasmic-facing; that stretch reads SSRSFCSTKFKHKSPHHISG. The chain crosses the membrane as a helical span at residues 135–155; sequence AFIFFCVLYMSFSSHLFISII. At 156–190 the chain is on the extracellular side; it reads ATHNLTSENFIYVTQSCSLLPLSYSRTSMFSAPMA. N-linked (GlcNAc...) asparagine glycosylation is present at asparagine 159. Residues 191 to 211 form a helical membrane-spanning segment; sequence IREAFLVSLMALSSGYMVALL. The Cytoplasmic segment spans residues 212 to 238; sequence WRHKKQAQHLHSTSLSSKASPEQRATR. The helical transmembrane segment at 239 to 259 threads the bilayer; that stretch reads TILLLMSFFVVLYILENAVFY. Topologically, residues 260-268 are extracellular; that stretch reads SRIKFKDGS. A helical membrane pass occupies residues 269–289; sequence ILYCVQIILCHSYATVNPFVF. The Cytoplasmic segment spans residues 290–310; that stretch reads ICTEKHIIKFWESKCGRIVNI.

The protein belongs to the G-protein coupled receptor 1 family.

The protein resides in the cell membrane. Putative pheromone receptor implicated in the regulation of social and reproductive behavior. The polypeptide is Vomeronasal type-1 receptor 40 (Vmn1r40) (Mus musculus (Mouse)).